The sequence spans 393 residues: S-adenosylmethionine synthase 1 (393 aa).

Glu-9 lines the Mg(2+) pocket. ATP is bound at residue His-15. Glu-43 contacts K(+). L-methionine is bound by residues Glu-56 and Gln-99. Residues 167 to 169 (DGK), 235 to 238 (SGRF), Asp-246, 252 to 253 (RK), Ala-269, Lys-273, and Lys-277 each bind ATP. Residue Asp-246 coordinates L-methionine. Lys-277 is a binding site for L-methionine.

Belongs to the AdoMet synthase family. In terms of assembly, homotetramer. Requires Mn(2+) as cofactor. Mg(2+) is required as a cofactor. The cofactor is Co(2+). K(+) serves as cofactor. It depends on NH4(+) as a cofactor. As to expression, mostly expressed in roots, and, to a lower extent, in hypocotyls and cotyledons.

It localises to the cytoplasm. The enzyme catalyses L-methionine + ATP + H2O = S-adenosyl-L-methionine + phosphate + diphosphate. It participates in amino-acid biosynthesis; S-adenosyl-L-methionine biosynthesis; S-adenosyl-L-methionine from L-methionine: step 1/1. Inhibited by products of SAMS reaction (SAM, Pi, PPi), substrate analogs (cycloleucine and ethionine), and alternative nucleotides (GTP, CTP and ADP). Strongly repressed by PPPi. Catalyzes the formation of S-adenosylmethionine from methionine and ATP. The reaction comprises two steps that are both catalyzed by the same enzyme: formation of S-adenosylmethionine (AdoMet) and triphosphate, and subsequent hydrolysis of the triphosphate. The chain is S-adenosylmethionine synthase 1 (SAMS1) from Catharanthus roseus (Madagascar periwinkle).